We begin with the raw amino-acid sequence, 106 residues long: Small ribosomal subunit protein uS10 (106 aa).

The protein belongs to the universal ribosomal protein uS10 family. In terms of assembly, part of the 30S ribosomal subunit.

Its function is as follows. Involved in the binding of tRNA to the ribosomes. In Hyphomonas neptunium (strain ATCC 15444), this protein is Small ribosomal subunit protein uS10.